Consider the following 226-residue polypeptide: Orotate phosphoribosyltransferase (226 aa).

A 5-phospho-alpha-D-ribose 1-diphosphate-binding site is contributed by K30. Orotate is bound at residue 38 to 39 (FF). 5-phospho-alpha-D-ribose 1-diphosphate is bound by residues 76–77 (YK), R106, K107, K110, H112, and 132–140 (DDVMTAGTA). Orotate-binding residues include T136 and R164.

It belongs to the purine/pyrimidine phosphoribosyltransferase family. PyrE subfamily. Homodimer.

It catalyses the reaction orotidine 5'-phosphate + diphosphate = orotate + 5-phospho-alpha-D-ribose 1-diphosphate. It participates in pyrimidine metabolism; UMP biosynthesis via de novo pathway; UMP from orotate: step 1/2. In terms of biological role, catalyzes the transfer of a ribosyl phosphate group from 5-phosphoribose 1-diphosphate to orotate, leading to the formation of orotidine monophosphate (OMP). The polypeptide is Orotate phosphoribosyltransferase (URA5) (Kluyveromyces lactis (strain ATCC 8585 / CBS 2359 / DSM 70799 / NBRC 1267 / NRRL Y-1140 / WM37) (Yeast)).